Here is a 308-residue protein sequence, read N- to C-terminus: Probable manganese-dependent inorganic pyrophosphatase (308 aa).

Residues His-9, Asp-13, Asp-15, Asp-75, His-97, and Asp-149 each coordinate Mn(2+).

The protein belongs to the PPase class C family. Requires Mn(2+) as cofactor.

It is found in the cytoplasm. It catalyses the reaction diphosphate + H2O = 2 phosphate + H(+). The protein is Probable manganese-dependent inorganic pyrophosphatase of Listeria monocytogenes serotype 4b (strain CLIP80459).